The chain runs to 782 residues: E3 UFM1-protein ligase 1 homolog (782 aa).

The segment at 405 to 478 is disordered; it reads VSTQELEDDG…TRGGGGASKK (74 aa).

The protein belongs to the UFL1 family.

E3 UFM1-protein ligase that mediates ufmylation of target proteins. The polypeptide is E3 UFM1-protein ligase 1 homolog (Drosophila sechellia (Fruit fly)).